Reading from the N-terminus, the 178-residue chain is Putative pre-16S rRNA nuclease (178 aa).

Positions 1 to 18 are enriched in basic and acidic residues; sequence MDHAEQGPDRPGVDDPGR. The tract at residues 1 to 21 is disordered; the sequence is MDHAEQGPDRPGVDDPGRGRR.

This sequence belongs to the YqgF nuclease family.

It localises to the cytoplasm. Could be a nuclease involved in processing of the 5'-end of pre-16S rRNA. The polypeptide is Putative pre-16S rRNA nuclease (Rhodococcus jostii (strain RHA1)).